Consider the following 574-residue polypeptide: Glutamyl-tRNA(Gln) amidotransferase subunit B, mitochondrial (574 aa).

Belongs to the GatB/GatE family. GatB subfamily. Subunit of the heterotrimeric GatCAB amidotransferase (AdT) complex, composed of A, B and C subunits.

It is found in the mitochondrion. It carries out the reaction L-glutamyl-tRNA(Gln) + L-glutamine + ATP + H2O = L-glutaminyl-tRNA(Gln) + L-glutamate + ADP + phosphate + H(+). In terms of biological role, allows the formation of correctly charged Gln-tRNA(Gln) through the transamidation of misacylated Glu-tRNA(Gln) in the mitochondria. The reaction takes place in the presence of glutamine and ATP through an activated gamma-phospho-Glu-tRNA(Gln). This chain is Glutamyl-tRNA(Gln) amidotransferase subunit B, mitochondrial, found in Phytophthora infestans (strain T30-4) (Potato late blight agent).